A 283-amino-acid polypeptide reads, in one-letter code: Pantothenate synthetase (283 aa).

30-37 contacts ATP; sequence MGALHEGH. His37 serves as the catalytic Proton donor. Residue Gln61 coordinates (R)-pantoate. Gln61 lines the beta-alanine pocket. 149-152 serves as a coordination point for ATP; sequence GEKD. Gln155 is a (R)-pantoate binding site. ATP contacts are provided by residues Leu178 and 186–189; that span reads RSSR.

The protein belongs to the pantothenate synthetase family. In terms of assembly, homodimer.

It localises to the cytoplasm. The enzyme catalyses (R)-pantoate + beta-alanine + ATP = (R)-pantothenate + AMP + diphosphate + H(+). It functions in the pathway cofactor biosynthesis; (R)-pantothenate biosynthesis; (R)-pantothenate from (R)-pantoate and beta-alanine: step 1/1. Catalyzes the condensation of pantoate with beta-alanine in an ATP-dependent reaction via a pantoyl-adenylate intermediate. In Christiangramia forsetii (strain DSM 17595 / CGMCC 1.15422 / KT0803) (Gramella forsetii), this protein is Pantothenate synthetase.